Consider the following 123-residue polypeptide: Hydrogenase maturation factor HypA (123 aa).

His-2 contributes to the Ni(2+) binding site. Residues Cys-73, Cys-76, Cys-90, and Cys-93 each contribute to the Zn(2+) site.

This sequence belongs to the HypA/HybF family.

In terms of biological role, involved in the maturation of [NiFe] hydrogenases. Required for nickel insertion into the metal center of the hydrogenase. The chain is Hydrogenase maturation factor HypA from Roseiflexus sp. (strain RS-1).